Consider the following 275-residue polypeptide: Elongation factor Ts (275 aa).

K36 is covalently cross-linked (Isoglutamyl lysine isopeptide (Lys-Gln) (interchain with Q-Cter in protein Pup)). The tract at residues 76-79 (TDFV) is involved in Mg(2+) ion dislocation from EF-Tu.

The protein belongs to the EF-Ts family.

Its subcellular location is the cytoplasm. Associates with the EF-Tu.GDP complex and induces the exchange of GDP to GTP. It remains bound to the aminoacyl-tRNA.EF-Tu.GTP complex up to the GTP hydrolysis stage on the ribosome. This Mycolicibacterium smegmatis (strain ATCC 700084 / mc(2)155) (Mycobacterium smegmatis) protein is Elongation factor Ts.